The chain runs to 238 residues: Probable transcriptional regulatory protein SAK_1658 (238 aa).

This sequence belongs to the TACO1 family. YeeN subfamily.

It localises to the cytoplasm. This chain is Probable transcriptional regulatory protein SAK_1658, found in Streptococcus agalactiae serotype Ia (strain ATCC 27591 / A909 / CDC SS700).